A 115-amino-acid chain; its full sequence is Large ribosomal subunit protein bL20 (115 aa).

The protein belongs to the bacterial ribosomal protein bL20 family.

Its function is as follows. Binds directly to 23S ribosomal RNA and is necessary for the in vitro assembly process of the 50S ribosomal subunit. It is not involved in the protein synthesizing functions of that subunit. The sequence is that of Large ribosomal subunit protein bL20 from Prochlorococcus marinus (strain MIT 9313).